Consider the following 208-residue polypeptide: MQARGTVKVQGDANVDGKMSTGQHPHHQHLNSTQANATTTALEYRAMNRPLYRGPISHNIISEMAEGFYVLSGGYKKLFIPSKDVYALMQNVGMHLTEEEFHDALRVIGQSEPQNADELSFSDFLLLMTREVDDTMADELRSAFFHYDKHKTGYVTRKQFTELFATLAERSTPEELEELLAVAEVDETDDKIDYNRFVNELTSRVNCM.

The interval 1 to 35 is disordered; it reads MQARGTVKVQGDANVDGKMSTGQHPHHQHLNSTQA. 4 EF-hand domains span residues 64–98, 99–134, 135–170, and 171–206; these read MAEGFYVLSGGYKKLFIPSKDVYALMQNVGMHLTE, EEFHDALRVIGQSEPQNADELSFSDFLLLMTREVDD, TMADELRSAFFHYDKHKTGYVTRKQFTELFATLAER, and STPEELEELLAVAEVDETDDKIDYNRFVNELTSRVN. 5 residues coordinate Ca(2+): Glu118, Asp123, Asp148, Thr152, and Tyr154.

This chain is EF-hand protein 5 variant 2, found in Trypanosoma cruzi.